The following is a 514-amino-acid chain: 2,3-bisphosphoglycerate-independent phosphoglycerate mutase (514 aa).

Residues D14 and S64 each coordinate Mn(2+). S64 serves as the catalytic Phosphoserine intermediate. Substrate-binding positions include H125, R155–D156, R187, R193, R263–R266, and K336. Mn(2+) contacts are provided by D403, H407, D444, H445, and H463.

Belongs to the BPG-independent phosphoglycerate mutase family. In terms of assembly, monomer. It depends on Mn(2+) as a cofactor.

It catalyses the reaction (2R)-2-phosphoglycerate = (2R)-3-phosphoglycerate. It functions in the pathway carbohydrate degradation; glycolysis; pyruvate from D-glyceraldehyde 3-phosphate: step 3/5. Its function is as follows. Catalyzes the interconversion of 2-phosphoglycerate and 3-phosphoglycerate. The polypeptide is 2,3-bisphosphoglycerate-independent phosphoglycerate mutase (Shewanella putrefaciens (strain CN-32 / ATCC BAA-453)).